A 307-amino-acid polypeptide reads, in one-letter code: Elongation factor Ts (307 aa).

The tract at residues 80–83 (TDFV) is involved in Mg(2+) ion dislocation from EF-Tu.

The protein belongs to the EF-Ts family.

The protein localises to the cytoplasm. Associates with the EF-Tu.GDP complex and induces the exchange of GDP to GTP. It remains bound to the aminoacyl-tRNA.EF-Tu.GTP complex up to the GTP hydrolysis stage on the ribosome. The protein is Elongation factor Ts of Nitrobacter hamburgensis (strain DSM 10229 / NCIMB 13809 / X14).